A 198-amino-acid polypeptide reads, in one-letter code: Glycerol-3-phosphate acyltransferase (198 aa).

The next 5 membrane-spanning stretches (helical) occupy residues 2–22 (IIDL…FGVL), 53–73 (LGFI…VIAT), 79–99 (PFMY…SCFL), 113–133 (VLIP…TFFI), and 152–172 (IILF…IMAL).

It belongs to the PlsY family. In terms of assembly, probably interacts with PlsX.

The protein localises to the cell membrane. It catalyses the reaction an acyl phosphate + sn-glycerol 3-phosphate = a 1-acyl-sn-glycero-3-phosphate + phosphate. It participates in lipid metabolism; phospholipid metabolism. Functionally, catalyzes the transfer of an acyl group from acyl-phosphate (acyl-PO(4)) to glycerol-3-phosphate (G3P) to form lysophosphatidic acid (LPA). This enzyme utilizes acyl-phosphate as fatty acyl donor, but not acyl-CoA or acyl-ACP. The chain is Glycerol-3-phosphate acyltransferase from Lawsonia intracellularis (strain PHE/MN1-00).